A 361-amino-acid chain; its full sequence is Peptide chain release factor 1 (361 aa).

The residue at position 235 (glutamine 235) is an N5-methylglutamine. A disordered region spans residues 288-307; that stretch reads AARSADRKDQVGSGDRSERI.

Belongs to the prokaryotic/mitochondrial release factor family. Methylated by PrmC. Methylation increases the termination efficiency of RF1.

The protein resides in the cytoplasm. Peptide chain release factor 1 directs the termination of translation in response to the peptide chain termination codons UAG and UAA. The polypeptide is Peptide chain release factor 1 (Nitrobacter hamburgensis (strain DSM 10229 / NCIMB 13809 / X14)).